Consider the following 394-residue polypeptide: Tubby-like F-box protein 2 (394 aa).

The disordered stretch occupies residues 21–44 (SKRSWSKSSHIAPDQTTPPLDNIP). A compositionally biased stretch (polar residues) spans 26–44 (SKSSHIAPDQTTPPLDNIP). One can recognise an F-box domain in the interval 46-101 (SPWASLPPELLHDIIWRVEESETAWPARAAVVSCASVCKSWRGITMEIVRIPEQCG). Disordered stretches follow at residues 200-225 (ASST…PTNS) and 268-297 (IEEE…PSLR).

It belongs to the TUB family. In terms of tissue distribution, ubiquitous.

In Arabidopsis thaliana (Mouse-ear cress), this protein is Tubby-like F-box protein 2.